A 96-amino-acid chain; its full sequence is DNA-binding protein Saci_1468 (96 aa).

This sequence belongs to the PDCD5 family.

In Sulfolobus acidocaldarius (strain ATCC 33909 / DSM 639 / JCM 8929 / NBRC 15157 / NCIMB 11770), this protein is DNA-binding protein Saci_1468.